Reading from the N-terminus, the 973-residue chain is E3 ubiquitin-protein ligase BRE1A (973 aa).

Residues 1-37 (MSGIGNKRAAGEPGTSMPPEKKTAVEDSGTTVETIKL) form a disordered region. Residue lysine 21 is modified to N6-acetyllysine. Serine 41 carries the phosphoserine modification. Positions 43-90 (TEELDIRTLQSKNRKLAEMLDQRQAIEDELREHIEKLERRQATDDASL) form a coiled coil. The tract at residues 128–153 (VVPEPEPDSDSNQERKDDRERGDGQE) is disordered. Phosphoserine is present on residues serine 136 and serine 138. Basic and acidic residues predominate over residues 139-151 (NQERKDDRERGDG). 2 coiled-coil regions span residues 168–378 (EEME…VKET) and 429–896 (SLHK…TTKK). 2 positions are modified to N6-acetyllysine: lysine 348 and lysine 510. The tract at residues 507 to 620 (DLNKTRLRSG…GKHDDGRKKE (114 aa)) is disordered. Serine 522 is modified (phosphoserine). Basic and acidic residues-rich tracts occupy residues 527-544 (EDPKDEPTELKQDSEDLA) and 553-620 (SQED…RKKE). Serine 560 bears the Phosphoserine mark. The segment at 920–959 (CPCCNMRKKDAVLTKCFHVFCFECVKTRYDTRQRKCPKCN) adopts an RING-type zinc-finger fold.

This sequence belongs to the BRE1 family. In terms of assembly, component of the RNF20/40 complex (also known as BRE1 complex) probably composed of 2 copies of RNF20/BRE1A and 2 copies of RNF40/BRE1B. Interacts with UBE2E1/UBCH6. Interacts with p53/TP53 and WAC. Interacts with PAF1; the interaction mediates the association of the PAF1 and RNF20/40 complexes which is a prerequsite for recruitment of UBE2A/B. Interacts with PA2G4. Interacts with FBXL19.

It is found in the nucleus. The enzyme catalyses S-ubiquitinyl-[E2 ubiquitin-conjugating enzyme]-L-cysteine + [acceptor protein]-L-lysine = [E2 ubiquitin-conjugating enzyme]-L-cysteine + N(6)-ubiquitinyl-[acceptor protein]-L-lysine.. It functions in the pathway protein modification; protein ubiquitination. In terms of biological role, component of the RNF20/40 E3 ubiquitin-protein ligase complex that mediates monoubiquitination of 'Lys-120' of histone H2B (H2BK120ub1). H2BK120ub1 gives a specific tag for epigenetic transcriptional activation and is also prerequisite for histone H3 'Lys-4' and 'Lys-79' methylation (H3K4me and H3K79me, respectively). It thereby plays a central role in histone code and gene regulation. The RNF20/40 complex forms a H2B ubiquitin ligase complex in cooperation with the E2 enzyme UBE2A or UBE2B; reports about the cooperation with UBE2E1/UBCH are contradictory. Required for transcriptional activation of Hox genes. Recruited to the MDM2 promoter, probably by being recruited by p53/TP53, and thereby acts as a transcriptional coactivator. Mediates the polyubiquitination of PA2G4 leading to its proteasome-mediated degradation. The protein is E3 ubiquitin-protein ligase BRE1A (Rnf20) of Mus musculus (Mouse).